Consider the following 170-residue polypeptide: Peptide deformylase 2 (170 aa).

Positions 94 and 136 each coordinate Fe cation. Glu137 is an active-site residue. His140 is a binding site for Fe cation.

The protein belongs to the polypeptide deformylase family. It depends on Fe(2+) as a cofactor.

It catalyses the reaction N-terminal N-formyl-L-methionyl-[peptide] + H2O = N-terminal L-methionyl-[peptide] + formate. Its function is as follows. Removes the formyl group from the N-terminal Met of newly synthesized proteins. Requires at least a dipeptide for an efficient rate of reaction. N-terminal L-methionine is a prerequisite for activity but the enzyme has broad specificity at other positions. The protein is Peptide deformylase 2 of Xanthomonas campestris pv. campestris (strain ATCC 33913 / DSM 3586 / NCPPB 528 / LMG 568 / P 25).